The chain runs to 320 residues: o-succinylbenzoate synthase (320 aa).

The active-site Proton donor is Lys-133. The Mg(2+) site is built by Asp-161, Glu-190, and Asp-213. Lys-235 serves as the catalytic Proton acceptor.

This sequence belongs to the mandelate racemase/muconate lactonizing enzyme family. MenC type 1 subfamily. A divalent metal cation is required as a cofactor.

It carries out the reaction (1R,6R)-6-hydroxy-2-succinyl-cyclohexa-2,4-diene-1-carboxylate = 2-succinylbenzoate + H2O. It functions in the pathway quinol/quinone metabolism; 1,4-dihydroxy-2-naphthoate biosynthesis; 1,4-dihydroxy-2-naphthoate from chorismate: step 4/7. The protein operates within quinol/quinone metabolism; menaquinone biosynthesis. Its function is as follows. Converts 2-succinyl-6-hydroxy-2,4-cyclohexadiene-1-carboxylate (SHCHC) to 2-succinylbenzoate (OSB). The protein is o-succinylbenzoate synthase of Salmonella heidelberg (strain SL476).